The chain runs to 471 residues: Casein kinase 1-like protein 9 (471 aa).

In terms of domain architecture, Protein kinase spans 9-278 (FKLGRKIGSG…LKRLFRDLFI (270 aa)). Residues 15 to 23 (IGSGSFGEL) and lysine 38 contribute to the ATP site. The Proton acceptor role is filled by aspartate 128. The disordered stretch occupies residues 300–471 (SSSGSSSRTR…RSLELLTLRK (172 aa)). The segment covering 325–339 (EKQERIAGKETRENR) has biased composition (basic and acidic residues). Positions 385 to 430 (SSRYGSSSRRAIPSSSRPSSAGGPSDSRSSSRLVTSTGGVGTVSNR) are enriched in low complexity. Positions 431 to 449 (ASTSQRIQAGNESRTSSFS) are enriched in polar residues. Residues 454-464 (NTREDPLRRSL) are compositionally biased toward basic and acidic residues.

The protein belongs to the protein kinase superfamily. CK1 Ser/Thr protein kinase family. Casein kinase I subfamily. In terms of assembly, monomer. Autophosphorylated on serine, threonine and tyrosine residues. In terms of tissue distribution, expressed in leaves, stems and flowers.

The protein resides in the cytoplasm. It is found in the nucleus. The enzyme catalyses L-seryl-[protein] + ATP = O-phospho-L-seryl-[protein] + ADP + H(+). It carries out the reaction L-threonyl-[protein] + ATP = O-phospho-L-threonyl-[protein] + ADP + H(+). Its function is as follows. Casein kinases are operationally defined by their preferential utilization of acidic proteins such as caseins as substrates. Can phosphorylate casein on serine and threonine residues, and poly(Glu,Tyr) in vitro. The sequence is that of Casein kinase 1-like protein 9 from Arabidopsis thaliana (Mouse-ear cress).